Reading from the N-terminus, the 442-residue chain is Ribosomal protein uS12 methylthiotransferase RimO (442 aa).

An MTTase N-terminal domain is found at 13-129 (RSIFLLSLGC…ILNILGTAYD (117 aa)). [4Fe-4S] cluster-binding residues include C22, C58, C92, C153, C157, and C160. One can recognise a Radical SAM core domain in the interval 139-369 (LSPSHYAWLK…MELQEGISEK (231 aa)). The 68-residue stretch at 372-439 (RALEEKALKV…AYELVGRIKN (68 aa)) folds into the TRAM domain.

Belongs to the methylthiotransferase family. RimO subfamily. The cofactor is [4Fe-4S] cluster.

It localises to the cytoplasm. The enzyme catalyses L-aspartate(89)-[ribosomal protein uS12]-hydrogen + (sulfur carrier)-SH + AH2 + 2 S-adenosyl-L-methionine = 3-methylsulfanyl-L-aspartate(89)-[ribosomal protein uS12]-hydrogen + (sulfur carrier)-H + 5'-deoxyadenosine + L-methionine + A + S-adenosyl-L-homocysteine + 2 H(+). Its function is as follows. Catalyzes the methylthiolation of an aspartic acid residue of ribosomal protein uS12. The sequence is that of Ribosomal protein uS12 methylthiotransferase RimO from Chlorobium phaeobacteroides (strain BS1).